A 257-amino-acid polypeptide reads, in one-letter code: Inositol diphosphatase DSP2 (257 aa).

The Tyrosine-protein phosphatase domain occupies 66–251; that stretch reads NFSMVDNGIF…VSGLKHTPMS (186 aa). Ile-168 and Lys-172 together coordinate 1D-myo-inositol hexakisphosphate. Cys-192 functions as the Phosphocysteine intermediate in the catalytic mechanism.

This sequence belongs to the protein-tyrosine phosphatase family. Atypical dual-specificity phosphatase Siw14-like subfamily. In terms of tissue distribution, expressed in roots, leaves, stems, flowers and siliques.

It catalyses the reaction 5-diphospho-1D-myo-inositol 1,2,3,4,6-pentakisphosphate + H2O = 1D-myo-inositol hexakisphosphate + phosphate + H(+). It carries out the reaction 1,5-bis(diphospho)-1D-myo-inositol 2,3,4,6-tetrakisphosphate + H2O = 1-diphospho-1D-myo-inositol 2,3,4,5,6-pentakisphosphate + phosphate + 2 H(+). The enzyme catalyses 3,5-bis(diphospho)-1D-myo-inositol 1,2,4,6-tetrakisphosphate + H2O = 3-diphospho-1D-myo-inositol 1,2,4,5,6-pentakisphosphate + phosphate + 2 H(+). The catalysed reaction is 6-diphospho-1D-myo-inositol pentakisphosphate + H2O = 1D-myo-inositol hexakisphosphate + phosphate + H(+). Its function is as follows. Cleaves the beta-phosphate at the 5-position of soluble inositol pyrophosphates. Has highest activity on 5-diphosphoinositol 1,2,3,4,6-pentakisphosphate (5-InsP(7)), 1,5-bis-diphosphoinositol 2,3,4,6-tetrakisphosphate (1,5-InsP(8)) and 3,5-InsP(8). Possesses phosphotyrosine phosphatase activity in vitro. Dephosphorylates the phosphoinositides PI(3,5)P2. Hydrolyzes para-nitrophenyl phosphate and O-methylfluorescein phosphate in vitro. This Arabidopsis thaliana (Mouse-ear cress) protein is Inositol diphosphatase DSP2.